A 352-amino-acid polypeptide reads, in one-letter code: MLTERQLMILKEIIRLFTESGQPVGSKKLMSELPMHVSSATIRNDMADLENVGLIEKTHSSSGRVPSMKGYRYYLDHLIQPAVLNPMDVATVQQSFGRHYHKIDEIVSQSANILSNLTSYTAITLGPEMAEIRLTGFRLVPLGNHQVMAIIVTSAGTVDNQVFTIPNAISGDELEKAIRVVNDHLIGLPLTVVSQKLKTEVPALLMQYMGSPGGFLNIFDDVLKQASQERLYVGGQSNLLNFSELTDVSQLKSIYNIINQSDDLAKLLELSPGEANSQVQVRLGDEMTNDLLKNYSLMTVNYDVGEHGQGLIALLGPTSMPHSRMIGLLDLFREELAKKLIDYYADFDDNQS.

Belongs to the HrcA family.

Its function is as follows. Negative regulator of class I heat shock genes (grpE-dnaK-dnaJ and groELS operons). Prevents heat-shock induction of these operons. The chain is Heat-inducible transcription repressor HrcA from Latilactobacillus sakei (Lactobacillus sakei).